A 308-amino-acid polypeptide reads, in one-letter code: UDP-N-acetylenolpyruvoylglucosamine reductase (308 aa).

Positions 30–213 (RVGGAAEWFI…KATTQSHLDH (184 aa)) constitute an FAD-binding PCMH-type domain. Arg176 is an active-site residue. Ser227 acts as the Proton donor in catalysis. Glu297 is a catalytic residue.

The protein belongs to the MurB family. FAD serves as cofactor.

It is found in the cytoplasm. It catalyses the reaction UDP-N-acetyl-alpha-D-muramate + NADP(+) = UDP-N-acetyl-3-O-(1-carboxyvinyl)-alpha-D-glucosamine + NADPH + H(+). It functions in the pathway cell wall biogenesis; peptidoglycan biosynthesis. Cell wall formation. The polypeptide is UDP-N-acetylenolpyruvoylglucosamine reductase (Acaryochloris marina (strain MBIC 11017)).